We begin with the raw amino-acid sequence, 210 residues long: Pyridoxine/pyridoxamine 5'-phosphate oxidase (210 aa).

Substrate is bound by residues 7–10 (REDY) and Lys-65. Residues 60–65 (RMVLLK), 75–76 (FT), Arg-81, Lys-82, and Gln-104 contribute to the FMN site. Tyr-122, Arg-126, and Ser-130 together coordinate substrate. FMN is bound by residues 139 to 140 (QS) and Trp-183. Substrate is bound at residue 189 to 191 (RLH). Residue Arg-193 participates in FMN binding.

Belongs to the pyridoxamine 5'-phosphate oxidase family. As to quaternary structure, homodimer. FMN serves as cofactor.

It catalyses the reaction pyridoxamine 5'-phosphate + O2 + H2O = pyridoxal 5'-phosphate + H2O2 + NH4(+). The catalysed reaction is pyridoxine 5'-phosphate + O2 = pyridoxal 5'-phosphate + H2O2. The protein operates within cofactor metabolism; pyridoxal 5'-phosphate salvage; pyridoxal 5'-phosphate from pyridoxamine 5'-phosphate: step 1/1. It participates in cofactor metabolism; pyridoxal 5'-phosphate salvage; pyridoxal 5'-phosphate from pyridoxine 5'-phosphate: step 1/1. Its function is as follows. Catalyzes the oxidation of either pyridoxine 5'-phosphate (PNP) or pyridoxamine 5'-phosphate (PMP) into pyridoxal 5'-phosphate (PLP). In Neisseria gonorrhoeae (strain ATCC 700825 / FA 1090), this protein is Pyridoxine/pyridoxamine 5'-phosphate oxidase.